A 259-amino-acid chain; its full sequence is Major prion protein (259 aa).

The first 24 residues, 1–24 (MGKIQLGYWILVLFIVTWSDLGLC), serve as a signal peptide directing secretion. The interaction with GRB2, ERI3 and SYN1 stretch occupies residues 25–235 (KKPKPRPGGG…EYEAAAQRAY (211 aa)). Residues 29-110 (PRPGGGWNSG…GYNKWKPDKP (82 aa)) are disordered. Residues glycine 63, glycine 64, histidine 72, glycine 74, histidine 82, glycine 84, histidine 92, and glycine 94 each contribute to the Cu(2+) site. The segment covering 91 to 101 (PHGGSNWGQGG) has biased composition (gly residues). Cysteine 184 and cysteine 219 are disulfide-bonded. N-linked (GlcNAc...) asparagine glycosylation is found at asparagine 186 and asparagine 202. Residue asparagine 236 is the site of GPI-anchor amidated asparagine attachment. A propeptide spans 237-259 (MAFFSAPPVTLLFLSFLIFLIVS) (removed in mature form).

This sequence belongs to the prion family. Monomer and homodimer. Has a tendency to aggregate into amyloid fibrils containing a cross-beta spine, formed by a steric zipper of superposed beta-strands. Soluble oligomers may represent an intermediate stage on the path to fibril formation. Copper binding may promote oligomerization. Interacts with GRB2, APP, ERI3/PRNPIP and SYN1. Mislocalized cytosolically exposed PrP interacts with MGRN1; this interaction alters MGRN1 subcellular location and causes lysosomal enlargement. Interacts with KIAA1191.

The protein localises to the cell membrane. It is found in the golgi apparatus. Its primary physiological function is unclear. Has cytoprotective activity against internal or environmental stresses. May play a role in neuronal development and synaptic plasticity. May be required for neuronal myelin sheath maintenance. May play a role in iron uptake and iron homeostasis. Soluble oligomers are toxic to cultured neuroblastoma cells and induce apoptosis (in vitro). Association with GPC1 (via its heparan sulfate chains) targets PRNP to lipid rafts. Also provides Cu(2+) or Zn(2+) for the ascorbate-mediated GPC1 deaminase degradation of its heparan sulfate side chains. The chain is Major prion protein (PRNP) from Trichosurus vulpecula (Brush-tailed possum).